The following is a 142-amino-acid chain: Large ribosomal subunit protein uL13 (142 aa).

Belongs to the universal ribosomal protein uL13 family. As to quaternary structure, part of the 50S ribosomal subunit.

Functionally, this protein is one of the early assembly proteins of the 50S ribosomal subunit, although it is not seen to bind rRNA by itself. It is important during the early stages of 50S assembly. This chain is Large ribosomal subunit protein uL13, found in Francisella tularensis subsp. holarctica (strain FTNF002-00 / FTA).